A 753-amino-acid chain; its full sequence is Taperin (753 aa).

Positions 141–348 (FDSPAAPRRR…IRPSSKPDME (208 aa)) are disordered. Residues 182–197 (PAPPVLPSQPAPPISP) show a composition bias toward pro residues. 2 stretches are compositionally biased toward polar residues: residues 230–239 (LQKTGSNSFT) and 250–263 (VNRS…TQES). Position 274 is a phosphoserine (S274). Over residues 300–322 (TPSATPVGPPAFLAPSPASATPS) the composition is skewed to low complexity. Polar residues predominate over residues 323-335 (QRQWVSSATSAND). Basic and acidic residues predominate over residues 337–347 (FEIRPSSKPDM). A phosphoserine mark is found at S402, S458, and S502. The interval 438–488 (GCPRPAISDTDKSVRRQRPASPPPFLPATTEAEPAEGLGVPGLTKNGQEPV) is disordered. Disordered stretches follow at residues 544–583 (FTVV…SGPH) and 637–676 (FEYP…DSEK). Over residues 559–571 (HLSQTNGQFQQGA) the composition is skewed to polar residues. The span at 648–672 (EEAEEEEEEEEEEEGEDGEEEEVGP) shows a compositional bias: acidic residues.

This sequence belongs to the taperin family. In terms of assembly, interacts with GRXCR2; the interaction restricts TPRN to the stereocilum basal region. Interacts with actin ACTB; the interaction may stabilize stereocilia. Interacts with CLIC5. Interacts with PTPRQ. TPRN, CLIC5 and PTPQR form concentric rings at the base of stereocilia and may form a complex. Interacts with phosphatase PPP1CA; the interaction results in inhibition of PPC1A phosphatase activity. Interacts with DNA damage response proteins XRCC6/KU70, XRCC5/KU80, PARP1, TOP1 and TOP2A; these interactions recruit TPRN to sites of DNA damage where it may play a role in DNA repair.

Its subcellular location is the cell projection. It localises to the stereocilium. The protein resides in the microvillus. The protein localises to the nucleus. It is found in the nucleoplasm. Its subcellular location is the cytoplasm. In terms of biological role, essential for hearing. Required for maintenance of stereocilia on both inner and outer hair cells. Necessary for the integrity of the stereociliary rootlet. May act as an actin cytoskeleton regulator involved in the regulation of actin dynamics at the pointed end in hair cells. Forms rings at the base of stereocilia and binds actin filaments in the stereocilia which may stabilize the stereocilia. Acts as a strong inhibitor of PPP1CA phosphatase activity. Recruited to sites of DNA damage and may play a role in DNA damage repair. This chain is Taperin (Tprn), found in Rattus norvegicus (Rat).